The chain runs to 314 residues: E3 ubiquitin-protein ligase CHIP (314 aa).

Over residues M1–G11 the composition is skewed to basic and acidic residues. The tract at residues M1–F47 is disordered. Gly residues predominate over residues G12–S29. Residues E31–G43 are compositionally biased toward basic and acidic residues. TPR repeat units follow at residues A36–V69, A70–S103, and K105–Q137. A U-box domain is found at D237 to V311.

Homodimer.

The protein resides in the cytoplasm. The protein localises to the nucleus. It localises to the mitochondrion. It catalyses the reaction S-ubiquitinyl-[E2 ubiquitin-conjugating enzyme]-L-cysteine + [acceptor protein]-L-lysine = [E2 ubiquitin-conjugating enzyme]-L-cysteine + N(6)-ubiquitinyl-[acceptor protein]-L-lysine.. E3 ubiquitin-protein ligase which targets misfolded chaperone substrates towards proteasomal degradation. Collaborates with ATXN3 in the degradation of misfolded chaperone substrates: ATXN3 restricting the length of ubiquitin chain attached to STUB1/CHIP substrates and preventing further chain extension. The chain is E3 ubiquitin-protein ligase CHIP from Gallus gallus (Chicken).